The sequence spans 128 residues: Large-conductance mechanosensitive channel (128 aa).

The next 2 membrane-spanning stretches (helical) occupy residues 11–31 and 70–90; these read FALK…AAFG and GAFI…FIFV.

Belongs to the MscL family. Homopentamer.

It is found in the cell membrane. In terms of biological role, channel that opens in response to stretch forces in the membrane lipid bilayer. May participate in the regulation of osmotic pressure changes within the cell. The protein is Large-conductance mechanosensitive channel of Listeria monocytogenes serotype 4b (strain CLIP80459).